A 587-amino-acid chain; its full sequence is ATP-dependent lipid A-core flippase (587 aa).

Transmembrane regions (helical) follow at residues 31–51 (LIASGIALVFNALADSGLIYL), 68–88 (LKIMAFVVVGMIILRGVTNFI), 145–165 (GSLITIVREGAYIISLLAVMF), 169–189 (WELTLVLFVIGPIIAVLITIV), and 259–279 (VQIIASLALVAVLFLATTPLI). Residues 32-315 (IASGIALVFN…LTNVNSQFQR (284 aa)) enclose the ABC transmembrane type-1 domain. Positions 347–583 (LEFKNVSFAY…NGAYKQLYSM (237 aa)) constitute an ABC transporter domain. 381-388 (GRSGSGKS) contacts ATP.

It belongs to the ABC transporter superfamily. Lipid exporter (TC 3.A.1.106) family. Homodimer.

It localises to the cell inner membrane. The catalysed reaction is ATP + H2O + lipid A-core oligosaccharideSide 1 = ADP + phosphate + lipid A-core oligosaccharideSide 2.. In terms of biological role, involved in lipopolysaccharide (LPS) biosynthesis. Translocates lipid A-core from the inner to the outer leaflet of the inner membrane. Transmembrane domains (TMD) form a pore in the inner membrane and the ATP-binding domain (NBD) is responsible for energy generation. The sequence is that of ATP-dependent lipid A-core flippase from Haemophilus influenzae (strain 86-028NP).